The sequence spans 372 residues: uncharacterized protein (372 aa).

This is an uncharacterized protein from Mycobacterium tuberculosis (strain CDC 1551 / Oshkosh).